Reading from the N-terminus, the 221-residue chain is Adenylate kinase (221 aa).

Residue 10–15 (GAGKGT) coordinates ATP. Residues 30-59 (STGDMLRAAVKAGTPLGVEAKKVMDAGGLV) form an NMP region. AMP is bound by residues Thr-31, Arg-36, 57-59 (GLV), 85-88 (GFPR), and Gln-92. The LID stretch occupies residues 122–159 (GRRVHVASGRTYHVKYNPPKTEGVDDETGEALIQRDDD). ATP contacts are provided by residues Arg-123 and 132 to 133 (TY). Residues Arg-156 and Arg-167 each contribute to the AMP site. Gly-207 lines the ATP pocket.

The protein belongs to the adenylate kinase family. As to quaternary structure, monomer.

The protein localises to the cytoplasm. It catalyses the reaction AMP + ATP = 2 ADP. The protein operates within purine metabolism; AMP biosynthesis via salvage pathway; AMP from ADP: step 1/1. Catalyzes the reversible transfer of the terminal phosphate group between ATP and AMP. Plays an important role in cellular energy homeostasis and in adenine nucleotide metabolism. The protein is Adenylate kinase of Cupriavidus necator (strain ATCC 17699 / DSM 428 / KCTC 22496 / NCIMB 10442 / H16 / Stanier 337) (Ralstonia eutropha).